The chain runs to 235 residues: Pyridoxine 5'-phosphate synthase (235 aa).

Residue Asn6 coordinates 3-amino-2-oxopropyl phosphate. A 1-deoxy-D-xylulose 5-phosphate-binding site is contributed by 8–9 (DH). Arg17 serves as a coordination point for 3-amino-2-oxopropyl phosphate. The active-site Proton acceptor is the His42. The 1-deoxy-D-xylulose 5-phosphate site is built by Arg44 and His49. Catalysis depends on Glu69, which acts as the Proton acceptor. 1-deoxy-D-xylulose 5-phosphate is bound at residue Thr99. The active-site Proton donor is His188. 3-amino-2-oxopropyl phosphate contacts are provided by residues Gly189 and 210–211 (GH).

The protein belongs to the PNP synthase family. As to quaternary structure, homooctamer; tetramer of dimers.

Its subcellular location is the cytoplasm. It catalyses the reaction 3-amino-2-oxopropyl phosphate + 1-deoxy-D-xylulose 5-phosphate = pyridoxine 5'-phosphate + phosphate + 2 H2O + H(+). The protein operates within cofactor biosynthesis; pyridoxine 5'-phosphate biosynthesis; pyridoxine 5'-phosphate from D-erythrose 4-phosphate: step 5/5. In terms of biological role, catalyzes the complicated ring closure reaction between the two acyclic compounds 1-deoxy-D-xylulose-5-phosphate (DXP) and 3-amino-2-oxopropyl phosphate (1-amino-acetone-3-phosphate or AAP) to form pyridoxine 5'-phosphate (PNP) and inorganic phosphate. This chain is Pyridoxine 5'-phosphate synthase, found in Wolbachia sp. subsp. Drosophila simulans (strain wRi).